Here is a 91-residue protein sequence, read N- to C-terminus: Small ribosomal subunit protein uS17 (91 aa).

The protein belongs to the universal ribosomal protein uS17 family. As to quaternary structure, part of the 30S ribosomal subunit.

Its function is as follows. One of the primary rRNA binding proteins, it binds specifically to the 5'-end of 16S ribosomal RNA. This is Small ribosomal subunit protein uS17 from Thermobifida fusca (strain YX).